The following is a 289-amino-acid chain: ATP synthase gamma chain (289 aa).

The protein belongs to the ATPase gamma chain family. In terms of assembly, F-type ATPases have 2 components, CF(1) - the catalytic core - and CF(0) - the membrane proton channel. CF(1) has five subunits: alpha(3), beta(3), gamma(1), delta(1), epsilon(1). CF(0) has three main subunits: a, b and c.

It localises to the cell membrane. Its function is as follows. Produces ATP from ADP in the presence of a proton gradient across the membrane. The gamma chain is believed to be important in regulating ATPase activity and the flow of protons through the CF(0) complex. This Mycoplasmopsis synoviae (strain 53) (Mycoplasma synoviae) protein is ATP synthase gamma chain.